The primary structure comprises 541 residues: Glucose-6-phosphate isomerase (541 aa).

The active-site Proton donor is the Glu-346. Catalysis depends on residues His-377 and Lys-506.

The protein belongs to the GPI family.

The protein localises to the cytoplasm. It carries out the reaction alpha-D-glucose 6-phosphate = beta-D-fructose 6-phosphate. It functions in the pathway carbohydrate biosynthesis; gluconeogenesis. It participates in carbohydrate degradation; glycolysis; D-glyceraldehyde 3-phosphate and glycerone phosphate from D-glucose: step 2/4. Functionally, catalyzes the reversible isomerization of glucose-6-phosphate to fructose-6-phosphate. The protein is Glucose-6-phosphate isomerase of Rhizobium etli (strain CIAT 652).